Consider the following 169-residue polypeptide: 6,7-dimethyl-8-ribityllumazine synthase (169 aa).

Residues F24, 58–60 (ALE), and 82–84 (AVV) each bind 5-amino-6-(D-ribitylamino)uracil. 87–88 (ET) is a binding site for (2S)-2-hydroxy-3-oxobutyl phosphate. H90 functions as the Proton donor in the catalytic mechanism. Residue N115 coordinates 5-amino-6-(D-ribitylamino)uracil. R129 is a (2S)-2-hydroxy-3-oxobutyl phosphate binding site.

Belongs to the DMRL synthase family.

It carries out the reaction (2S)-2-hydroxy-3-oxobutyl phosphate + 5-amino-6-(D-ribitylamino)uracil = 6,7-dimethyl-8-(1-D-ribityl)lumazine + phosphate + 2 H2O + H(+). Its pathway is cofactor biosynthesis; riboflavin biosynthesis; riboflavin from 2-hydroxy-3-oxobutyl phosphate and 5-amino-6-(D-ribitylamino)uracil: step 1/2. In terms of biological role, catalyzes the formation of 6,7-dimethyl-8-ribityllumazine by condensation of 5-amino-6-(D-ribitylamino)uracil with 3,4-dihydroxy-2-butanone 4-phosphate. This is the penultimate step in the biosynthesis of riboflavin. This is 6,7-dimethyl-8-ribityllumazine synthase from Cupriavidus metallidurans (strain ATCC 43123 / DSM 2839 / NBRC 102507 / CH34) (Ralstonia metallidurans).